The primary structure comprises 586 residues: Arginine--tRNA ligase (586 aa).

A 'HIGH' region motif is present at residues 131–141; that stretch reads ANPTGPLHVGH.

This sequence belongs to the class-I aminoacyl-tRNA synthetase family. In terms of assembly, monomer.

The protein localises to the cytoplasm. The enzyme catalyses tRNA(Arg) + L-arginine + ATP = L-arginyl-tRNA(Arg) + AMP + diphosphate. This chain is Arginine--tRNA ligase, found in Nitrosomonas eutropha (strain DSM 101675 / C91 / Nm57).